A 451-amino-acid polypeptide reads, in one-letter code: Adenylyltransferase and sulfurtransferase MOCS3-2 (451 aa).

Residues 42–62 (GEDSDEAEESSNDMPTPQTKL) are disordered. Residues 43 to 52 (EDSDEAEESS) are compositionally biased toward acidic residues. T60 carries the post-translational modification Phosphothreonine. ATP is bound by residues G99, D120, 127 to 131 (SNLHR), K144, and 188 to 189 (DN). Zn(2+) is bound by residues C229 and C232. C246 functions as the Glycyl thioester intermediate; for adenylyltransferase activity in the catalytic mechanism. Residues C304 and C307 each contribute to the Zn(2+) site. A Rhodanese domain is found at 353–449 (QSQPHLLLDV…WTGSVDATFP (97 aa)). C408 functions as the Cysteine persulfide intermediate; for sulfurtransferase activity in the catalytic mechanism.

In the N-terminal section; belongs to the HesA/MoeB/ThiF family. UBA4 subfamily. Zn(2+) serves as cofactor.

The protein localises to the cytoplasm. The enzyme catalyses [molybdopterin-synthase sulfur-carrier protein]-C-terminal Gly-Gly + ATP + H(+) = [molybdopterin-synthase sulfur-carrier protein]-C-terminal Gly-Gly-AMP + diphosphate. It catalyses the reaction [molybdopterin-synthase sulfur-carrier protein]-C-terminal Gly-Gly-AMP + S-sulfanyl-L-cysteinyl-[cysteine desulfurase] + AH2 = [molybdopterin-synthase sulfur-carrier protein]-C-terminal-Gly-aminoethanethioate + L-cysteinyl-[cysteine desulfurase] + A + AMP + 2 H(+). The protein operates within tRNA modification; 5-methoxycarbonylmethyl-2-thiouridine-tRNA biosynthesis. Its pathway is cofactor biosynthesis; molybdopterin biosynthesis. Functionally, plays a central role in 2-thiolation of mcm(5)S(2)U at tRNA wobble positions of cytosolic tRNA(Lys), tRNA(Glu) and tRNA(Gln). Also essential during biosynthesis of the molybdenum cofactor. Acts by mediating the C-terminal thiocarboxylation of sulfur carriers URM1 and MOCS2A. Its N-terminus first activates URM1 and MOCS2A as acyl-adenylates (-COAMP), then the persulfide sulfur on the catalytic cysteine is transferred to URM1 and MOCS2A to form thiocarboxylation (-COSH) of their C-terminus. The reaction probably involves hydrogen sulfide that is generated from the persulfide intermediate and that acts as a nucleophile towards URM1 and MOCS2A. Subsequently, a transient disulfide bond is formed. Does not use thiosulfate as sulfur donor; NFS1 probably acting as a sulfur donor for thiocarboxylation reactions. This Drosophila pseudoobscura pseudoobscura (Fruit fly) protein is Adenylyltransferase and sulfurtransferase MOCS3-2.